A 762-amino-acid polypeptide reads, in one-letter code: Phosphoribosylformylglycinamidine synthase subunit PurL (762 aa).

H58 is an active-site residue. 2 residues coordinate ATP: Y61 and R105. Mg(2+) is bound at residue E107. Substrate-binding positions include 108 to 111 and R130; that span reads SHNH. The active-site Proton acceptor is H109. D131 contributes to the Mg(2+) binding site. Q255 contributes to the substrate binding site. D283 serves as a coordination point for Mg(2+). 327-329 is a binding site for substrate; that stretch reads ESQ. ATP is bound by residues N513 and G550. Residue N551 coordinates Mg(2+). Position 553 (S553) interacts with substrate.

It belongs to the FGAMS family. In terms of assembly, monomer. Part of the FGAM synthase complex composed of 1 PurL, 1 PurQ and 2 PurS subunits.

It localises to the cytoplasm. It catalyses the reaction N(2)-formyl-N(1)-(5-phospho-beta-D-ribosyl)glycinamide + L-glutamine + ATP + H2O = 2-formamido-N(1)-(5-O-phospho-beta-D-ribosyl)acetamidine + L-glutamate + ADP + phosphate + H(+). Its pathway is purine metabolism; IMP biosynthesis via de novo pathway; 5-amino-1-(5-phospho-D-ribosyl)imidazole from N(2)-formyl-N(1)-(5-phospho-D-ribosyl)glycinamide: step 1/2. In terms of biological role, part of the phosphoribosylformylglycinamidine synthase complex involved in the purines biosynthetic pathway. Catalyzes the ATP-dependent conversion of formylglycinamide ribonucleotide (FGAR) and glutamine to yield formylglycinamidine ribonucleotide (FGAM) and glutamate. The FGAM synthase complex is composed of three subunits. PurQ produces an ammonia molecule by converting glutamine to glutamate. PurL transfers the ammonia molecule to FGAR to form FGAM in an ATP-dependent manner. PurS interacts with PurQ and PurL and is thought to assist in the transfer of the ammonia molecule from PurQ to PurL. The polypeptide is Phosphoribosylformylglycinamidine synthase subunit PurL (Corynebacterium glutamicum (strain ATCC 13032 / DSM 20300 / JCM 1318 / BCRC 11384 / CCUG 27702 / LMG 3730 / NBRC 12168 / NCIMB 10025 / NRRL B-2784 / 534)).